Consider the following 265-residue polypeptide: Cell division protein DivIB (265 aa).

Topologically, residues 1-30 are cytoplasmic; it reads MKNSKVIKLQDRVPKLKNQQKKKKKNVNHR. A helical membrane pass occupies residues 31–51; it reads LILYISILFLLVLFLIYFRSP. The Extracellular segment spans residues 52–265; it reads LSNIKKISVF…NRMIVFNTLS (214 aa). The 69-residue stretch at 53–121 folds into the POTRA domain; sequence SNIKKISVFG…NKIDVHIEEY (69 aa).

This sequence belongs to the FtsQ/DivIB family. DivIB subfamily.

Its subcellular location is the cell membrane. Its function is as follows. Cell division protein that may be involved in stabilizing or promoting the assembly of the division complex. This Bacillus anthracis protein is Cell division protein DivIB.